The primary structure comprises 153 residues: Calmodulin-like protein 4 (153 aa).

EF-hand domains are found at residues 8 to 43 (DAIQKFKECFSLYDKKGKGKIPAGDLLTVMRCLGTC), 44 to 79 (PTPGEVTRHLQVHKIGKDGEVDFSTFLTIMYRQQKQ), 81 to 116 (DPENEIMVAMLMSDKQKKGVIPLKELRAKLTQMGEK), and 117 to 152 (LTPEEVDDLLKGVKVGPDGMVKYEEFVRQITLPVPD).

It belongs to the calmodulin family. Associates with the IMAC/intermicrovillar adhesion complex.

Its subcellular location is the cell projection. It is found in the microvillus. Its function is as follows. As part of the intermicrovillar adhesion complex/IMAC plays a role in epithelial brush border differentiation, controlling microvilli organization and length. Acts as a light chain for MYO7B and is required for efficient targeting of the IMAC to the tips of border brush microvilli. This chain is Calmodulin-like protein 4 (calml4), found in Xenopus tropicalis (Western clawed frog).